Consider the following 198-residue polypeptide: Transcription antitermination protein NusB (198 aa).

Belongs to the NusB family.

Involved in transcription antitermination. Required for transcription of ribosomal RNA (rRNA) genes. Binds specifically to the boxA antiterminator sequence of the ribosomal RNA (rrn) operons. This Methylococcus capsulatus (strain ATCC 33009 / NCIMB 11132 / Bath) protein is Transcription antitermination protein NusB.